The following is a 1003-amino-acid chain: DNA topoisomerase 3-alpha (1003 aa).

The region spanning 35-179 (KVLCVAEKND…NLRVLRARFS (145 aa)) is the Toprim domain. Residues 197 to 617 (DQRVSDAVDV…QQVQKYKQVF (421 aa)) form the Topo IA-type catalytic domain. Tyrosine 362 acts as the O-(5'-phospho-DNA)-tyrosine intermediate in catalysis. The tract at residues 400–426 (GGPTPRNGSKSDQAHPPIHPTKYTSGL) is disordered. The C4-type zinc-finger motif lies at 658-685 (CPQCNKDMVLKTKKSGGFYLSCMGFPEC). Cysteine 815, cysteine 817, cysteine 840, and cysteine 845 together coordinate Zn(2+). The GRF-type 1 zinc finger occupies 815-854 (CNCGREAVLLTVRKQGPNQGRHFYKCSNGDCNFFLWADSS). Positions 856–888 (STGGGTPTSASGPPGSSVGCPSSVGSHMDGFGS) are disordered. Residues 862 to 888 (PTSASGPPGSSVGCPSSVGSHMDGFGS) show a composition bias toward low complexity. Residues cysteine 899, cysteine 901, cysteine 924, and cysteine 932 each contribute to the Zn(2+) site. Residues 899 to 941 (CLCGQPAVTRTVQKDGPNKGRQFHTCAKPREQQCGFFQWVDEN) form a GRF-type 2 zinc finger. The tract at residues 946 to 991 (SFAAPAWPGGRGKAQRPEAASKRPRAGSSDAGSTVKKPRKCSLCHQ) is disordered.

This sequence belongs to the type IA topoisomerase family. As to quaternary structure, binds ssDNA. Interacts (via N-terminal region) with BLM; the interaction is direct. Directly interacts with RMI1. Component of the RMI complex, containing at least TOP3A, RMI1 and RMI2. The RMI complex interacts with BLM. Requires Mg(2+) as cofactor. In terms of tissue distribution, highly expressed in testis.

The protein resides in the mitochondrion matrix. The catalysed reaction is ATP-independent breakage of single-stranded DNA, followed by passage and rejoining.. Functionally, releases the supercoiling and torsional tension of DNA introduced during the DNA replication and transcription by transiently cleaving and rejoining one strand of the DNA duplex. Introduces a single-strand break via transesterification at a target site in duplex DNA. The scissile phosphodiester is attacked by the catalytic tyrosine of the enzyme, resulting in the formation of a DNA-(5'-phosphotyrosyl)-enzyme intermediate and the expulsion of a 3'-OH DNA strand. The free DNA strand then undergoes passage around the unbroken strand thus removing DNA supercoils. Finally, in the religation step, the DNA 3'-OH attacks the covalent intermediate to expel the active-site tyrosine and restore the DNA phosphodiester backbone. As an essential component of the RMI complex it is involved in chromosome separation and the processing of homologous recombination intermediates to limit DNA crossover formation in cells. Has DNA decatenation activity. It is required for mtDNA decatenation and segregation after completion of replication, in a process that does not require BLM, RMI1 and RMI2. In Mus musculus (Mouse), this protein is DNA topoisomerase 3-alpha (Top3a).